A 405-amino-acid chain; its full sequence is MTSADKNNPDTSTAQGSSADLGVTVPKGFSAAAVTAGIKPSGKSDMALIRNDGPDDIAAAMFTRNQVTAAPVRYTKANNDGTFRAVVVNSGNANACNGAQGDKDARATAEKAAELLGCQPGDVAVCSTGLIGDVLPMDKVLSGVDELAGKLDQSITAGNDAARAIMTTDLVAKEAVYHGDGWSIGAMGKGVGMMAPSLATMLVFITTDAHLPSADMAHEALAGATPTTFDCIDIDGATSTNDTVLLMASGASGITPDAEEFNAAIHQVCLDIAMQLQADAEGVTKRVSITVGGAETDADAQTAARVIGRDNLFKCAMFGSDPNWGRVLAAVGMAPVKMNPEAISVSFNGHPVCINSTGAPGARTVDLSGADIAVEVDLGVGEGRATVWTTDLSYSYVEINSEYST.

Residues 1 to 18 are compositionally biased toward polar residues; sequence MTSADKNNPDTSTAQGSS. Residues 1 to 21 are disordered; that stretch reads MTSADKNNPDTSTAQGSSADL. Residues Thr-167, Lys-189, Thr-200, Glu-281, Asn-400, and Thr-405 each contribute to the substrate site. Thr-200 acts as the Nucleophile in catalysis.

Belongs to the ArgJ family. As to quaternary structure, heterotetramer of two alpha and two beta chains.

It localises to the cytoplasm. The catalysed reaction is N(2)-acetyl-L-ornithine + L-glutamate = N-acetyl-L-glutamate + L-ornithine. It carries out the reaction L-glutamate + acetyl-CoA = N-acetyl-L-glutamate + CoA + H(+). Its pathway is amino-acid biosynthesis; L-arginine biosynthesis; L-ornithine and N-acetyl-L-glutamate from L-glutamate and N(2)-acetyl-L-ornithine (cyclic): step 1/1. It functions in the pathway amino-acid biosynthesis; L-arginine biosynthesis; N(2)-acetyl-L-ornithine from L-glutamate: step 1/4. Catalyzes two activities which are involved in the cyclic version of arginine biosynthesis: the synthesis of N-acetylglutamate from glutamate and acetyl-CoA as the acetyl donor, and of ornithine by transacetylation between N(2)-acetylornithine and glutamate. This chain is Arginine biosynthesis bifunctional protein ArgJ, found in Corynebacterium jeikeium (strain K411).